Here is a 344-residue protein sequence, read N- to C-terminus: Protein RecA (344 aa).

66-73 serves as a coordination point for ATP; sequence GPESSGKT.

Belongs to the RecA family.

The protein localises to the cytoplasm. Functionally, can catalyze the hydrolysis of ATP in the presence of single-stranded DNA, the ATP-dependent uptake of single-stranded DNA by duplex DNA, and the ATP-dependent hybridization of homologous single-stranded DNAs. It interacts with LexA causing its activation and leading to its autocatalytic cleavage. The chain is Protein RecA from Methylobacillus flagellatus.